The chain runs to 95 residues: UPF0235 protein A2cp1_1215 (95 aa).

It belongs to the UPF0235 family.

The protein is UPF0235 protein A2cp1_1215 of Anaeromyxobacter dehalogenans (strain 2CP-1 / ATCC BAA-258).